Here is a 212-residue protein sequence, read N- to C-terminus: Protein-L-isoaspartate O-methyltransferase (212 aa).

Residue S60 is part of the active site.

It belongs to the methyltransferase superfamily. L-isoaspartyl/D-aspartyl protein methyltransferase family.

It is found in the cytoplasm. The catalysed reaction is [protein]-L-isoaspartate + S-adenosyl-L-methionine = [protein]-L-isoaspartate alpha-methyl ester + S-adenosyl-L-homocysteine. In terms of biological role, catalyzes the methyl esterification of L-isoaspartyl residues in peptides and proteins that result from spontaneous decomposition of normal L-aspartyl and L-asparaginyl residues. It plays a role in the repair and/or degradation of damaged proteins. The polypeptide is Protein-L-isoaspartate O-methyltransferase (Pseudomonas putida (strain W619)).